We begin with the raw amino-acid sequence, 244 residues long: Cobalt transport protein CbiM (244 aa).

Positions 1–28 (MKKLWKFIPFVLMGVIYFTLTNPESAHA) are cleaved as a signal peptide. 6 helical membrane-spanning segments follow: residues 37–57 (PVKWAVFWLIVFIPFLVLGLI), 71–91 (LLLALCAAFIFVLSALKIPSV), 103–123 (LATVMFGPLVVSVLGVIVLLF), 135–155 (TLGANAMSMAVIGPMVGFVVY), 166–186 (SVSIFLCAMTADLATYFTTSV), and 206–226 (FMAIFCVTQVPIAIAEGLLTV).

This sequence belongs to the CbiM family. Forms an energy-coupling factor (ECF) transporter complex composed of an ATP-binding protein (A component, CbiO), a transmembrane protein (T component, CbiQ) and 2 possible substrate-capture proteins (S components, CbiM and CbiN) of unknown stoichimetry.

It is found in the cell membrane. It participates in cofactor biosynthesis; adenosylcobalamin biosynthesis. In terms of biological role, part of the energy-coupling factor (ECF) transporter complex CbiMNOQ involved in cobalt import. In Listeria seeligeri serovar 1/2b (strain ATCC 35967 / DSM 20751 / CCM 3970 / CCUG 15530 / CIP 100100 / LMG 11386 / NCTC 11856 / SLCC 3954 / 1120), this protein is Cobalt transport protein CbiM.